We begin with the raw amino-acid sequence, 239 residues long: Ribonuclease PH (239 aa).

Residues Arg-86 and 124-126 (GTR) each bind phosphate.

This sequence belongs to the RNase PH family. Homohexameric ring arranged as a trimer of dimers.

The enzyme catalyses tRNA(n+1) + phosphate = tRNA(n) + a ribonucleoside 5'-diphosphate. Functionally, phosphorolytic 3'-5' exoribonuclease that plays an important role in tRNA 3'-end maturation. Removes nucleotide residues following the 3'-CCA terminus of tRNAs; can also add nucleotides to the ends of RNA molecules by using nucleoside diphosphates as substrates, but this may not be physiologically important. Probably plays a role in initiation of 16S rRNA degradation (leading to ribosome degradation) during starvation. The chain is Ribonuclease PH from Rhizobium etli (strain CIAT 652).